A 106-amino-acid chain; its full sequence is ATP-dependent Clp protease adapter protein ClpS (106 aa).

This sequence belongs to the ClpS family. As to quaternary structure, binds to the N-terminal domain of the chaperone ClpA.

Functionally, involved in the modulation of the specificity of the ClpAP-mediated ATP-dependent protein degradation. This Photobacterium profundum (strain SS9) protein is ATP-dependent Clp protease adapter protein ClpS.